A 325-amino-acid polypeptide reads, in one-letter code: NADH-quinone oxidoreductase subunit H (325 aa).

A run of 9 helical transmembrane segments spans residues 11 to 31 (ILLSILKAVVILLVVVTCGAF), 50 to 69 (NRVGWGGSLQLVADMIKMFF), 81 to 101 (VIFTLAPMIAFTSLLLSFAIV), 114 to 134 (IGILFFLMMAGLAVYAVLFAG), 154 to 174 (VSYEVFLGLSLMGVVAQAGSF), 186 to 206 (LWNVIPQFFGFVTFAIAGVAV), 237 to 257 (FFVGEYIGIVTVSALMVTLFF), 265 to 285 (LPPFVWFALKTAFFMMMFILI), and 304 to 324 (VCLPLTLINLLVTAAVILWQA).

It belongs to the complex I subunit 1 family. NDH-1 is composed of 13 different subunits. Subunits NuoA, H, J, K, L, M, N constitute the membrane sector of the complex.

It localises to the cell inner membrane. The catalysed reaction is a quinone + NADH + 5 H(+)(in) = a quinol + NAD(+) + 4 H(+)(out). NDH-1 shuttles electrons from NADH, via FMN and iron-sulfur (Fe-S) centers, to quinones in the respiratory chain. The immediate electron acceptor for the enzyme in this species is believed to be ubiquinone. Couples the redox reaction to proton translocation (for every two electrons transferred, four hydrogen ions are translocated across the cytoplasmic membrane), and thus conserves the redox energy in a proton gradient. This subunit may bind ubiquinone. This chain is NADH-quinone oxidoreductase subunit H, found in Salmonella arizonae (strain ATCC BAA-731 / CDC346-86 / RSK2980).